The sequence spans 168 residues: Small ribosomal subunit protein bS6 (168 aa).

Residues 103 to 168 form a disordered region; it reads RQAIAEEKEK…AAADKSDDNA (66 aa). The segment covering 106-115 has biased composition (basic and acidic residues); it reads IAEEKEKKAE. Over residues 116–125 the composition is skewed to low complexity; sequence GQAAADAAPA.

Belongs to the bacterial ribosomal protein bS6 family.

In terms of biological role, binds together with bS18 to 16S ribosomal RNA. In Desulfosudis oleivorans (strain DSM 6200 / JCM 39069 / Hxd3) (Desulfococcus oleovorans), this protein is Small ribosomal subunit protein bS6.